Here is a 172-residue protein sequence, read N- to C-terminus: HAD-like hydrolase superfamily protein P8B7.31 (172 aa).

The Nucleophile role is filled by D14. Mg(2+) is bound by residues D14, D16, and D137. D16 functions as the Proton donor in the catalytic mechanism.

This sequence belongs to the HAD-like hydrolase superfamily.

It is found in the cytoplasm. It localises to the nucleus. In Schizosaccharomyces pombe (strain 972 / ATCC 24843) (Fission yeast), this protein is HAD-like hydrolase superfamily protein P8B7.31.